The following is a 344-amino-acid chain: Phenylalanine--tRNA ligase alpha subunit (344 aa).

Glu255 is a binding site for Mg(2+).

It belongs to the class-II aminoacyl-tRNA synthetase family. Phe-tRNA synthetase alpha subunit type 1 subfamily. Tetramer of two alpha and two beta subunits. Mg(2+) is required as a cofactor.

The protein localises to the cytoplasm. It carries out the reaction tRNA(Phe) + L-phenylalanine + ATP = L-phenylalanyl-tRNA(Phe) + AMP + diphosphate + H(+). This chain is Phenylalanine--tRNA ligase alpha subunit, found in Persephonella marina (strain DSM 14350 / EX-H1).